The chain runs to 122 residues: UPF0145 protein TV0671 (122 aa).

The protein belongs to the UPF0145 family.

This chain is UPF0145 protein TV0671, found in Thermoplasma volcanium (strain ATCC 51530 / DSM 4299 / JCM 9571 / NBRC 15438 / GSS1).